A 553-amino-acid chain; its full sequence is Arginine--tRNA ligase (553 aa).

The 'HIGH' region signature appears at 130–140; it reads ANPTGPVHLGG.

Belongs to the class-I aminoacyl-tRNA synthetase family. In terms of assembly, monomer.

The protein resides in the cytoplasm. It carries out the reaction tRNA(Arg) + L-arginine + ATP = L-arginyl-tRNA(Arg) + AMP + diphosphate. This chain is Arginine--tRNA ligase, found in Saccharopolyspora erythraea (strain ATCC 11635 / DSM 40517 / JCM 4748 / NBRC 13426 / NCIMB 8594 / NRRL 2338).